Reading from the N-terminus, the 272-residue chain is Small ribosomal subunit protein mS23 (272 aa).

Residues 233–272 (KENASKAAGDASAVSSEKQVEDDVVNFDESTDADQEVLHF) form a disordered region. Residues 252–272 (VEDDVVNFDESTDADQEVLHF) are compositionally biased toward acidic residues.

It belongs to the mitochondrion-specific ribosomal protein mS23 family. Component of the mitochondrial small ribosomal subunit.

Its subcellular location is the mitochondrion. The chain is Small ribosomal subunit protein mS23 (RSM25) from Candida glabrata (strain ATCC 2001 / BCRC 20586 / JCM 3761 / NBRC 0622 / NRRL Y-65 / CBS 138) (Yeast).